The primary structure comprises 450 residues: MVLAKTLHQEVYQTLSETFDFANNDQRLWWHSTAPMFQKILQTANYSIYAQYQHLSIYKSHIIPFLGVYPTRSGERWLSILTRYGTPFELSLNCSDSIVRYTYEPINAATGSHLDPFNTFAIWEALKKLIDSQPGIDLQWFSYFKQELTLDANESTYLHSQNLVKEQIKTQNKLALDLKGDKFVLKTYIYPELKSVATGKSVQELVFGSVRKLAQKHKSIRPAFEMLEDYVQSRNKVPTTDDSHNTPLSSRLLSCDLVSPTKSRVKIYLLERMVSLPAMEDLWTLGGRREDQSTIEGLEMIRELWGLLNMSPGLRAYPEPYLPLGAIPNEQLPSMANYTLHHNDPIPEPQVYFTVFGMNDMEVTNALTKFFMRHEWSDMASKYKACLRESFPHHNYEALNYIHSYISFSYRNNKPYLSVYLHSFETGEWPVFPEGLIAFDGCRRDLTCYK.

L-tryptophan-binding positions include 80 to 81 and Glu-89; that span reads IL. Substrate is bound by residues Arg-100, Lys-186, and Tyr-188. Residues Tyr-190 and Arg-251 each contribute to the L-tryptophan site. Residues Arg-264, Lys-266, Tyr-268, Gln-350, Tyr-352, Tyr-416, and Tyr-420 each contribute to the substrate site.

The protein belongs to the tryptophan dimethylallyltransferase family. Homodimer.

It catalyses the reaction L-tryptophan + dimethylallyl diphosphate = 4-(3-methylbut-2-enyl)-L-tryptophan + diphosphate. It functions in the pathway alkaloid biosynthesis; ergot alkaloid biosynthesis. In terms of biological role, catalyzes the first step of ergot alkaloid biosynthesis. Ergot alkaloids, which are produced by endophyte fungi, can enhance plant host fitness, but also cause livestock toxicosis to host plants. This Epichloe coenophiala (Tall fescue endophyte fungus) protein is Tryptophan dimethylallyltransferase 2 (dmaW2).